We begin with the raw amino-acid sequence, 310 residues long: N-acetylmuramic acid 6-phosphate etherase (310 aa).

The SIS domain maps to 64-227 (ITSRLKSNGR…STSVMIKLGK (164 aa)). Catalysis depends on Glu92, which acts as the Proton donor. Residue Glu123 is part of the active site.

This sequence belongs to the GCKR-like family. MurNAc-6-P etherase subfamily. Homodimer.

The enzyme catalyses N-acetyl-D-muramate 6-phosphate + H2O = N-acetyl-D-glucosamine 6-phosphate + (R)-lactate. The protein operates within amino-sugar metabolism; N-acetylmuramate degradation. Functionally, specifically catalyzes the cleavage of the D-lactyl ether substituent of MurNAc 6-phosphate, producing GlcNAc 6-phosphate and D-lactate. This chain is N-acetylmuramic acid 6-phosphate etherase, found in Prochlorococcus marinus (strain NATL2A).